The sequence spans 481 residues: ATP synthase subunit beta, chloroplastic (481 aa).

162-169 (GGAGVGKT) serves as a coordination point for ATP.

It belongs to the ATPase alpha/beta chains family. As to quaternary structure, F-type ATPases have 2 components, CF(1) - the catalytic core - and CF(0) - the membrane proton channel. CF(1) has five subunits: alpha(3), beta(3), gamma(1), delta(1), epsilon(1). CF(0) has four main subunits: a(1), b(1), b'(1) and c(9-12).

It localises to the plastid. The protein localises to the chloroplast thylakoid membrane. The enzyme catalyses ATP + H2O + 4 H(+)(in) = ADP + phosphate + 5 H(+)(out). Produces ATP from ADP in the presence of a proton gradient across the membrane. The catalytic sites are hosted primarily by the beta subunits. This Chlorella vulgaris (Green alga) protein is ATP synthase subunit beta, chloroplastic.